A 589-amino-acid polypeptide reads, in one-letter code: Sphingosine-1-phosphate lyase (589 aa).

At 1 to 58 (MSGVSNKTVSINGWYGMPIHLLREEGDFAQFMILTINELKIAIHGYLRNTPWYNMLKD) the chain is on the lumenal side. N6 carries an N-linked (GlcNAc...) asparagine glycan. The chain crosses the membrane as a helical span at residues 59–76 (YLFVIFCYKLISNFFYLL). Topologically, residues 77–589 (KVYGPVRLAV…LGPGEDTATK (513 aa)) are cytoplasmic. At K380 the chain carries N6-(pyridoxal phosphate)lysine.

Belongs to the group II decarboxylase family. Sphingosine-1-phosphate lyase subfamily. In terms of assembly, homodimer. Pyridoxal 5'-phosphate is required as a cofactor. Glycosylated.

The protein resides in the endoplasmic reticulum membrane. It catalyses the reaction sphinganine 1-phosphate = hexadecanal + phosphoethanolamine. It carries out the reaction (4R)-hydroxysphinganine 1-phosphate = (2R)-hydroxyhexadecanal + phosphoethanolamine. It participates in lipid metabolism; sphingolipid metabolism. Sphingosine-1-phosphate lyase that cleaves phosphorylated sphingoid bases (PSBs), such as sphingosine-1-phosphate, into fatty aldehydes and phosphoethanolamine. Prefers C-16 dihydrosphingosine-l-phosphate (DHS-P) as a substrate. Regulates intracellular levels of sphingolipid long-chain base phosphates (LCBPs). Plays a role in the regulation of global responses to nutrient deprivation in yeast. The chain is Sphingosine-1-phosphate lyase from Saccharomyces cerevisiae (strain ATCC 204508 / S288c) (Baker's yeast).